The chain runs to 92 residues: Small ribosomal subunit protein uS19c (92 aa).

Belongs to the universal ribosomal protein uS19 family.

Its subcellular location is the plastid. The protein resides in the chloroplast. Functionally, protein S19 forms a complex with S13 that binds strongly to the 16S ribosomal RNA. In Psilotum nudum (Whisk fern), this protein is Small ribosomal subunit protein uS19c.